The sequence spans 2340 residues: Proto-oncogene tyrosine-protein kinase ROS (2340 aa).

The signal sequence occupies residues 1–28 (MKNICWLTLKLVKFVVLGCIIWISVAQS). Residues 29–1854 (TVLSSCLTSC…EDGVWITETS (1826 aa)) are Extracellular-facing. N-linked (GlcNAc...) asparagine glycosylation occurs at asparagine 53. Fibronectin type-III domains lie at 111-206 (LPTA…VPET) and 207-295 (APLI…PSPS). Residues asparagine 334 and asparagine 362 are each glycosylated (N-linked (GlcNAc...) asparagine). In terms of domain architecture, Fibronectin type-III 3 spans 567-667 (LPGHPQEVSV…APSVGTTLVP (101 aa)). N-linked (GlcNAc...) asparagine glycans are attached at residues asparagine 935 and asparagine 1011. Fibronectin type-III domains lie at 943-1038 (IPDP…SVPS) and 1039-1146 (APEN…TSEI). Asparagine 1243 carries N-linked (GlcNAc...) asparagine glycosylation. Fibronectin type-III domains are found at residues 1442–1549 (ASDM…TKSG), 1550–1649 (VPGA…VNMF), 1651–1744 (TPEK…TKAG), and 1745–1846 (VPSK…LVED). Residue asparagine 1676 is glycosylated (N-linked (GlcNAc...) asparagine). A helical transmembrane segment spans residues 1855-1875 (FILTIIVGIFLVATVPLTFVW). Residues 1876–2340 (HRSLKSHKAS…AHSEHGDVSE (465 aa)) lie on the Cytoplasmic side of the membrane. Positions 1938–2216 (LSLRLLLGSG…QLQLFRNVFL (279 aa)) constitute a Protein kinase domain. ATP-binding positions include 1944–1952 (LGSGAFGEV) and lysine 1973. Aspartate 2072 functions as the Proton acceptor in the catalytic mechanism. Phosphotyrosine; by autocatalysis occurs at positions 2267 and 2327.

It belongs to the protein kinase superfamily. Tyr protein kinase family. Insulin receptor subfamily. In terms of assembly, interacts with PTPN11; may activate the PI3 kinase-mTOR signaling pathway. Interacts with VAV3; constitutive interaction mediating VAV3 phosphorylation. Interacts with PTPN6 (via SH2 1 domain); the interaction is direct and promotes ROS1 dephosphorylation. Phosphorylated. Probably autophosphorylates. Phosphorylation at Tyr-2267 and/or Tyr-2327 recruits PTPN11. Phosphorylation at Tyr-2267 is required for the interaction with PTPN6 that mediates ROS1 dephosphorylation. Phosphorylation at Tyr-2267 stimulates the kinase activity and the activation of the ERK1 signaling cascade. Expressed by epithelial cells of the caput epididymis (at protein level).

It localises to the cell membrane. It carries out the reaction L-tyrosyl-[protein] + ATP = O-phospho-L-tyrosyl-[protein] + ADP + H(+). With respect to regulation, inhibited by dephosphorylation by PTPN6. Functionally, receptor tyrosine kinase (RTK) that plays a role in epithelial cell differentiation and regionalization of the proximal epididymal epithelium. NELL2 is an endogenous ligand for ROS1. Upon endogenous stimulation by NELL2, ROS1 activates the intracellular signaling pathway and triggers epididymal epithelial differentiation and subsequent sperm maturation. May activate several downstream signaling pathways related to cell differentiation, proliferation, growth and survival including the PI3 kinase-mTOR signaling pathway. Mediates the phosphorylation of PTPN11, an activator of this pathway. May also phosphorylate and activate the transcription factor STAT3 to control anchorage-independent cell growth. Mediates the phosphorylation and the activation of VAV3, a guanine nucleotide exchange factor regulating cell morphology. May activate other downstream signaling proteins including AKT1, MAPK1, MAPK3, IRS1, and PLCG2. The sequence is that of Proto-oncogene tyrosine-protein kinase ROS (Ros1) from Mus musculus (Mouse).